The following is a 354-amino-acid chain: Muscleblind-like protein 3 (354 aa).

C3H1-type zinc fingers lie at residues 14-42, 48-74, 174-202, and 210-236; these read WLTL…HPPR, NGRV…HPPP, SDKL…HPTD, and DNTV…HPPA.

The protein belongs to the muscleblind family. Highly expressed in the placenta.

The protein localises to the nucleus. The protein resides in the cytoplasm. Functionally, mediates pre-mRNA alternative splicing regulation. Acts either as activator or repressor of splicing on specific pre-mRNA targets. Inhibits cardiac troponin-T (TNNT2) pre-mRNA exon inclusion but induces insulin receptor (IR) pre-mRNA exon inclusion in muscle. Antagonizes the alternative splicing activity pattern of CELF proteins. May play a role in myotonic dystrophy pathophysiology (DM). Could inhibit terminal muscle differentiation, acting at approximately the time of myogenin induction. The protein is Muscleblind-like protein 3 (MBNL3) of Homo sapiens (Human).